The chain runs to 20 residues: Protein PR-L1 (20 aa).

Belongs to the BetVI family.

The chain is Protein PR-L1 from Lupinus luteus (European yellow lupine).